Consider the following 594-residue polypeptide: APOBEC1 complementation factor (594 aa).

3 consecutive RRM domains span residues 56–134 (CEIF…ASVD), 136–218 (CRLF…WAEP), and 231–303 (KILY…LAKP). Residues 359 to 408 (HFPATKGHLSNRALIRTPSVREIYMNVPVGAAGVRGLGGRGYLAYTGLGR) form a required for nuclear localization region. Position 498 is a phosphothreonine (Thr-498).

In terms of assembly, part of the apolipoprotein B mRNA editing complex with APOBEC1. Interacts with TNPO2; TNPO2 may be responsible for transport of A1CF into the nucleus. Interacts with SYNCRIP. Interacts with CELF2/CUGBP2. Interacts with RBM47. In terms of tissue distribution, isoforms 1 and 2 are widely expressed while isoforms 3 and 4 are restricted to liver and small intestine.

Its subcellular location is the nucleus. The protein resides in the endoplasmic reticulum. The protein localises to the cytoplasm. Its function is as follows. Essential component of the apolipoprotein B mRNA editing enzyme complex which is responsible for the postranscriptional editing of a CAA codon for Gln to a UAA codon for stop in APOB mRNA. Binds to APOB mRNA and is probably responsible for docking the catalytic subunit, APOBEC1, to the mRNA to allow it to deaminate its target cytosine. The complex also seems to protect the edited APOB mRNA from nonsense-mediated decay. The polypeptide is APOBEC1 complementation factor (A1cf) (Rattus norvegicus (Rat)).